Reading from the N-terminus, the 554-residue chain is CTP synthase (554 aa).

The amidoligase domain stretch occupies residues 1-265 (MTPLIFVTGG…DEIVVNQLKL (265 aa)). Residue S13 coordinates CTP. S13 provides a ligand contact to UTP. 14-19 (SLGKGI) serves as a coordination point for ATP. Residues D71 and E139 each contribute to the Mg(2+) site. CTP is bound by residues 146 to 148 (DIE), 186 to 191 (KTKPTQ), and K222. UTP-binding positions include 186–191 (KTKPTQ) and K222. The Glutamine amidotransferase type-1 domain maps to 292–545 (TIAVVGKYVD…IRAARERKAG (254 aa)). Residue G353 participates in L-glutamine binding. C380 serves as the catalytic Nucleophile; for glutamine hydrolysis. L-glutamine contacts are provided by residues 381 to 384 (YGMQ), E404, and R471. Catalysis depends on residues H518 and E520.

It belongs to the CTP synthase family. Homotetramer.

It catalyses the reaction UTP + L-glutamine + ATP + H2O = CTP + L-glutamate + ADP + phosphate + 2 H(+). The catalysed reaction is L-glutamine + H2O = L-glutamate + NH4(+). The enzyme catalyses UTP + NH4(+) + ATP = CTP + ADP + phosphate + 2 H(+). It functions in the pathway pyrimidine metabolism; CTP biosynthesis via de novo pathway; CTP from UDP: step 2/2. Its activity is regulated as follows. Allosterically activated by GTP, when glutamine is the substrate; GTP has no effect on the reaction when ammonia is the substrate. The allosteric effector GTP functions by stabilizing the protein conformation that binds the tetrahedral intermediate(s) formed during glutamine hydrolysis. Inhibited by the product CTP, via allosteric rather than competitive inhibition. Catalyzes the ATP-dependent amination of UTP to CTP with either L-glutamine or ammonia as the source of nitrogen. Regulates intracellular CTP levels through interactions with the four ribonucleotide triphosphates. This chain is CTP synthase, found in Stenotrophomonas maltophilia (strain K279a).